Reading from the N-terminus, the 274-residue chain is uncharacterized protein (274 aa).

Positions 253 to 274 are disordered; that stretch reads QTGDVRTTEGTALTDDTTKRNI.

This is an uncharacterized protein from Deinococcus radiodurans (strain ATCC 13939 / DSM 20539 / JCM 16871 / CCUG 27074 / LMG 4051 / NBRC 15346 / NCIMB 9279 / VKM B-1422 / R1).